We begin with the raw amino-acid sequence, 365 residues long: MAEKEVPLTAVKVDALVVMKIIKHSSQSFPTTATGSIVGMDVDGTLEITNSFPFPVVEMPADSHFDNAAPNPAAAAPRAKANVAYQAEMIRMLREVNVDANNVGWYTSANMGNFVNMNVIENQFFYQKEMNERTVALVHDVSRSAQGSLSLRAFRLSSKFMTAFKENKFTSEELQKSSLRHQDIFVELPVEIHNSHLITTFIHQLQCPSQSTPTDLPPSLAALEKSSFVKDSVLAPNFDNLSLSIDPFLEKNCDLLLDSIETHHTETNNFQYYQRSLAREQAKITAWQAKRKAENASRAALKQPLLPEDEYQRLFKLPQEPSRLETMLNTRQVEQYSRQIDSFVSATTGKMFAVKGNLLPGETAK.

Residues 11 to 160 (VKVDALVVMK…LRAFRLSSKF (150 aa)) enclose the MPN domain.

Belongs to the eIF-3 subunit H family. As to quaternary structure, component of the eukaryotic translation initiation factor 3 (eIF-3) complex.

Its subcellular location is the cytoplasm. Functionally, component of the eukaryotic translation initiation factor 3 (eIF-3) complex, which is involved in protein synthesis of a specialized repertoire of mRNAs and, together with other initiation factors, stimulates binding of mRNA and methionyl-tRNAi to the 40S ribosome. The eIF-3 complex specifically targets and initiates translation of a subset of mRNAs involved in cell proliferation. This is Eukaryotic translation initiation factor 3 subunit H from Aspergillus oryzae (strain ATCC 42149 / RIB 40) (Yellow koji mold).